The sequence spans 331 residues: Adenosine deaminase (331 aa).

His-12 and His-14 together coordinate Zn(2+). Residues His-14 and Asp-16 each contribute to the substrate site. Residue His-197 participates in Zn(2+) binding. Glu-200 serves as the catalytic Proton donor. Residue Asp-278 coordinates Zn(2+).

Belongs to the metallo-dependent hydrolases superfamily. Adenosine and AMP deaminases family. Adenosine deaminase subfamily. The cofactor is Zn(2+).

The enzyme catalyses adenosine + H2O + H(+) = inosine + NH4(+). It carries out the reaction 2'-deoxyadenosine + H2O + H(+) = 2'-deoxyinosine + NH4(+). Functionally, catalyzes the hydrolytic deamination of adenosine and 2-deoxyadenosine. The protein is Adenosine deaminase of Shewanella pealeana (strain ATCC 700345 / ANG-SQ1).